Consider the following 104-residue polypeptide: Glycine-rich protein (104 aa).

Residues methionine 1 to alanine 18 form the signal peptide.

The protein belongs to the non-disulfide-bridged peptide (NDBP) superfamily. As to expression, expressed by the venom gland.

It is found in the secreted. In Lychas mucronatus (Chinese swimming scorpion), this protein is Glycine-rich protein.